We begin with the raw amino-acid sequence, 103 residues long: Large ribosomal subunit protein bL21 (103 aa).

The protein belongs to the bacterial ribosomal protein bL21 family. Part of the 50S ribosomal subunit. Contacts protein L20.

Its function is as follows. This protein binds to 23S rRNA in the presence of protein L20. This Burkholderia ambifaria (strain MC40-6) protein is Large ribosomal subunit protein bL21.